The following is a 260-amino-acid chain: Type II methyltransferase M1.MboII (260 aa).

Residues cysteine 12, aspartate 30, lysine 197, 223–225, and 241–242 each bind S-adenosyl-L-methionine; these read SGT and DM.

It belongs to the N(4)/N(6)-methyltransferase family. At low concentration exists as a monomer and homodimer. Probably binds to DNA as a monomer.

It carries out the reaction a 2'-deoxyadenosine in DNA + S-adenosyl-L-methionine = an N(6)-methyl-2'-deoxyadenosine in DNA + S-adenosyl-L-homocysteine + H(+). A beta subtype methylase that recognizes the double-stranded sequence 5'-GAAGA-3', methylates A-5 on the top strand, and protects the DNA from cleavage by the MboII endonuclease. It is not known if the cytosine of the complementary sequence TCTTC is also methylated by this enzyme. In Moraxella bovis, this protein is Type II methyltransferase M1.MboII.